The sequence spans 579 residues: Protein LYRIC (579 aa).

Residues methionine 1–proline 48 are Lumenal-facing. Positions methionine 1 to tryptophan 71 are activation of NF-kappa-B. A helical membrane pass occupies residues glycine 49–tyrosine 69. Residues glycine 70 to threonine 579 are Cytoplasmic-facing. The tract at residues alanine 72–serine 168 is interaction with BCCIP. Residues alanine 78–glycine 222 are disordered. The tract at residues aspartate 100–arginine 204 is interaction with RELA. Positions leucine 108–lysine 126 are enriched in basic and acidic residues. Positions glutamate 159–serine 168 are enriched in basic residues. Position 179 is a phosphoserine (serine 179). Residues histidine 197 to aspartate 207 show a composition bias toward basic residues. Phosphoserine is present on residues serine 215 and serine 250. Position 263 is an N6-acetyllysine (lysine 263). A disordered region spans residues asparagine 277–threonine 579. 3 positions are modified to phosphoserine: serine 297, serine 303, and serine 308. Over residues serine 317–asparagine 329 the composition is skewed to polar residues. Residues serine 341 and serine 366 each carry the phosphoserine modification. Polar residues-rich tracts occupy residues glutamate 351–glutamine 369, asparagine 380–tryptophan 391, and leucine 410–glutamine 420. The segment at glycine 378–lysine 440 is lung-homing for mammary tumors. A phosphoserine mark is found at serine 412 and serine 423. Basic and acidic residues predominate over residues lysine 421–glutamate 431. Residues lysine 438–lysine 448 are compositionally biased toward basic residues. Over residues glutamine 449–leucine 470 the composition is skewed to basic and acidic residues. A phosphoserine mark is found at serine 454, serine 475, serine 491, and serine 493. 2 stretches are compositionally biased toward polar residues: residues proline 517–valine 533 and asparagine 546–serine 565. Serine 565 bears the Phosphoserine mark. Residues glutamine 568–threonine 579 show a composition bias toward basic residues.

In terms of assembly, interacts with BCCIP, CREBBP/CBP and RELA/p65. In terms of tissue distribution, in the mammary gland, expressed at the apical surface of epithelial cells lining ducts, as well as in the mammary fat pad. Not detected in the spleen, kidney, lung, or skin; minute amounts seen in the liver. Expressed in Purkinje neurons in the early postnatal and adult cerebellum. Overexpressed in mammary tumors (at protein level).

It localises to the endoplasmic reticulum membrane. It is found in the nucleus membrane. The protein localises to the cell junction. Its subcellular location is the tight junction. The protein resides in the nucleus. It localises to the nucleolus. It is found in the cytoplasm. The protein localises to the perinuclear region. In terms of biological role, down-regulates SLC1A2/EAAT2 promoter activity when expressed ectopically. Activates the nuclear factor kappa-B (NF-kappa-B) transcription factor. Promotes anchorage-independent growth of immortalized melanocytes and astrocytes which is a key component in tumor cell expansion. Promotes lung metastasis and also has an effect on bone and brain metastasis, possibly by enhancing the seeding of tumor cells to the target organ endothelium. Induces chemoresistance. This is Protein LYRIC (Mtdh) from Mus musculus (Mouse).